The primary structure comprises 297 residues: UDP-N-acetylenolpyruvoylglucosamine reductase (297 aa).

Positions 22–195 constitute an FAD-binding PCMH-type domain; it reads RVGGPAQYYA…LAGRFRLHRA (174 aa). Residue Arg-169 is part of the active site. The active-site Proton donor is Ser-223. Glu-293 is an active-site residue.

It belongs to the MurB family. FAD serves as cofactor.

The protein localises to the cytoplasm. It catalyses the reaction UDP-N-acetyl-alpha-D-muramate + NADP(+) = UDP-N-acetyl-3-O-(1-carboxyvinyl)-alpha-D-glucosamine + NADPH + H(+). It functions in the pathway cell wall biogenesis; peptidoglycan biosynthesis. Functionally, cell wall formation. The polypeptide is UDP-N-acetylenolpyruvoylglucosamine reductase (Chloroflexus aggregans (strain MD-66 / DSM 9485)).